Reading from the N-terminus, the 213-residue chain is RxLR effector protein PexRD1 (213 aa).

A signal peptide spans 1-19 (MRACNTLLPTAIVLTSCDA). A RxLR-dEER motif is present at residues 50–77 (RQLRGFYATENTDPVNNQDTAHEDGEER).

It belongs to the RxLR effector family.

The protein localises to the secreted. It is found in the host nucleus. Functionally, effector that enhances P.infestans colonization of Nicotiana benthamiana leaves. The chain is RxLR effector protein PexRD1 from Phytophthora infestans (strain T30-4) (Potato late blight agent).